A 472-amino-acid polypeptide reads, in one-letter code: MKSELIFLPVPAFGHLVGMVEMAKLFISRHENLSVTVLISKFFIDTGIDNYNKSLLAKPTPRLTIINLPEIDPQKYLLKPRCAIFPSLIENQKTHVRDVMSRMTQSESTRIVGLLADILFVDIFDIADEFNVPTYVYSPAGTGFLGLAFHLQTLNDDKKQDVTEFRNSDTELLVPSFANPVPAEFSPSIFLEKDGRHDVLLSLYRRCREAKGIIVNTFEELEPYAINSLRMDSMIPPIYPVGPILNLNGEGQNSDEAAVILGWLDDQPPSSVVFLCFGSFGSFPENQVKEIAMGLERSGHRFLWSLRPCISEGETTLQLKYSNLELPAGFLDRTSCVRKVIGWAPQMAVLAHEAVGGFVSHCGWNSVLESVWYGMPVATWPMYGEQQLNAFEMVKELGLAVEIEVDYRNEYNKSDFIVKADEIETKIKKLMMDGKNSKIRKKVKEMKEKSRVAMSENGSSYTSLAKLFEEIM.

Histidine 15 (proton acceptor) is an active-site residue. Histidine 15 is a binding site for an anthocyanidin. Aspartate 117 functions as the Charge relay in the catalytic mechanism. UDP-alpha-D-glucose contacts are provided by alanine 344, glutamine 346, histidine 361, tryptophan 364, asparagine 365, serine 366, and glutamate 369. Residue glycine 384 coordinates an anthocyanidin. The UDP-alpha-D-glucose site is built by glutamate 385 and glutamine 386.

Belongs to the UDP-glycosyltransferase family.

It catalyses the reaction (20S)-ginsenoside F1 + UDP-alpha-D-glucose = (20S)-ginsenoside Rg1 + UDP + H(+). The protein operates within secondary metabolite biosynthesis; terpenoid biosynthesis. Functionally, probable component of the triterpene saponins (e.g. ginsenosides) biosynthetic pathway. No detectable activity toward protopanaxatriol (PPT). The protein is UDP-glucosyltransferase 103 of Panax ginseng (Korean ginseng).